A 114-amino-acid chain; its full sequence is Macrophage migration inhibitory factor homolog (114 aa).

Pro2 acts as the Proton acceptor; via imino nitrogen in catalysis. Substrate-binding residues include Lys33 and Ile65.

It belongs to the MIF family.

It localises to the secreted. The enzyme catalyses L-dopachrome = 5,6-dihydroxyindole-2-carboxylate. It carries out the reaction 3-phenylpyruvate = enol-phenylpyruvate. Its function is as follows. Tautomerization of the methyl ester of L-dopachrome. Inhibits migration of human peripheral blood mononuclear cells. This chain is Macrophage migration inhibitory factor homolog, found in Trichinella spiralis (Trichina worm).